The primary structure comprises 518 residues: Zinc finger protein 776 (518 aa).

Residues 14–89 (VTFEDVAVNF…HWTGVCTKKV (76 aa)) form the KRAB domain. Residues K171, K196, K220, and K247 each participate in a glycyl lysine isopeptide (Lys-Gly) (interchain with G-Cter in SUMO2) cross-link. The C2H2-type 1; degenerate zinc-finger motif lies at 208 to 230 (YICGESTIPFSNKHSLVLHQRLL). The C2H2-type 2; degenerate zinc-finger motif lies at 236-258 (YVCSDSGKFTSKSNSFNNHQGVR). 7 C2H2-type zinc fingers span residues 264 to 286 (YQCG…QRVH), 292 to 314 (YECG…QRVH), 320 to 342 (YECD…QRVH), 348 to 370 (YQCG…QRVH), 376 to 398 (FECT…QRVH), 404 to 426 (YECK…QRVH), and 432 to 454 (YECR…QQIH). The segment at 460-482 (HECGECGKCFHQKGSLIRHQQIH) adopts a C2H2-type 10; degenerate zinc-finger fold. Residues 488–510 (HECGECGKCFRQKGNLIKHQRVH) form a C2H2-type 11 zinc finger.

This sequence belongs to the krueppel C2H2-type zinc-finger protein family.

Its subcellular location is the nucleus. In terms of biological role, may be involved in transcriptional regulation. This is Zinc finger protein 776 (ZNF776) from Homo sapiens (Human).